A 637-amino-acid chain; its full sequence is tRNA uridine 5-carboxymethylaminomethyl modification enzyme MnmG (637 aa).

Residues 15 to 20 (GAGHAG), isoleucine 127, and serine 182 each bind FAD. Position 276–290 (276–290 (GPRYCPSIEDKIVRF)) interacts with NAD(+). Glutamine 373 serves as a coordination point for FAD.

The protein belongs to the MnmG family. In terms of assembly, homodimer. Heterotetramer of two MnmE and two MnmG subunits. The cofactor is FAD.

The protein localises to the cytoplasm. In terms of biological role, NAD-binding protein involved in the addition of a carboxymethylaminomethyl (cmnm) group at the wobble position (U34) of certain tRNAs, forming tRNA-cmnm(5)s(2)U34. This chain is tRNA uridine 5-carboxymethylaminomethyl modification enzyme MnmG, found in Streptococcus pneumoniae (strain Hungary19A-6).